A 43-amino-acid chain; its full sequence is Cytochrome b559 subunit beta (43 aa).

A helical membrane pass occupies residues W18–A34. H22 contacts heme.

The protein belongs to the PsbE/PsbF family. In terms of assembly, heterodimer of an alpha subunit and a beta subunit. PSII is composed of 1 copy each of membrane proteins PsbA, PsbB, PsbC, PsbD, PsbE, PsbF, PsbH, PsbI, PsbJ, PsbK, PsbL, PsbM, PsbT, PsbX, PsbY, PsbZ, Psb30/Ycf12, at least 3 peripheral proteins of the oxygen-evolving complex and a large number of cofactors. It forms dimeric complexes. Requires heme b as cofactor.

The protein resides in the plastid. It is found in the chloroplast thylakoid membrane. Functionally, this b-type cytochrome is tightly associated with the reaction center of photosystem II (PSII). PSII is a light-driven water:plastoquinone oxidoreductase that uses light energy to abstract electrons from H(2)O, generating O(2) and a proton gradient subsequently used for ATP formation. It consists of a core antenna complex that captures photons, and an electron transfer chain that converts photonic excitation into a charge separation. In Stigeoclonium helveticum (Green alga), this protein is Cytochrome b559 subunit beta.